The sequence spans 519 residues: Cytosol aminopeptidase (519 aa).

Ser-42 carries the phosphoserine modification. Residue Lys-45 is modified to N6-succinyllysine. The residue at position 54 (Ser-54) is a Phosphoserine. 2 positions are modified to N6-succinyllysine: Lys-61 and Lys-103. Phosphoserine occurs at positions 180 and 194. Zn(2+) contacts are provided by Leu-202, Met-203, and Thr-205. Position 221 is an N6-acetyllysine; alternate (Lys-221). Lys-221 carries the post-translational modification N6-succinyllysine; alternate. A Phosphoserine modification is found at Ser-238. Zn(2+) is bound by residues Lys-282 and Asp-287. Substrate contacts are provided by Lys-282, Asp-287, Ser-292, and Lys-294. Asp-287 is a Mg(2+) binding site. The active site involves Lys-294. The Zn(2+) site is built by Arg-303, Asp-305, Asp-364, and Glu-366. Asp-305 and Asp-364 together coordinate substrate. Residues Asp-364 and Glu-366 each contribute to the Mg(2+) site. The active site involves Arg-368. At Lys-455 the chain carries N6-acetyllysine; alternate. At Lys-455 the chain carries N6-succinyllysine; alternate. Lys-476 is modified (N6-succinyllysine). At Lys-489 the chain carries N6-acetyllysine; alternate. Lys-489 is subject to N6-succinyllysine; alternate.

Belongs to the peptidase M17 family. Homohexamer. The cofactor is Zn(2+). It depends on Mn(2+) as a cofactor.

Its subcellular location is the cytoplasm. The enzyme catalyses Release of an N-terminal amino acid, Xaa-|-Yaa-, in which Xaa is preferably Leu, but may be other amino acids including Pro although not Arg or Lys, and Yaa may be Pro. Amino acid amides and methyl esters are also readily hydrolyzed, but rates on arylamides are exceedingly low.. The catalysed reaction is an S-substituted L-cysteinylglycine + H2O = an S-substituted L-cysteine + glycine. It catalyses the reaction L-cysteinylglycine + H2O = L-cysteine + glycine. It carries out the reaction S-benzyl-L-cysteinylglycine + H2O = S-benzyl-L-cysteine + glycine. The enzyme catalyses Release of N-terminal proline from a peptide.. In terms of biological role, cytosolic metallopeptidase that catalyzes the removal of unsubstituted N-terminal hydrophobic amino acids from various peptides. The presence of Zn(2+) ions is essential for the peptidase activity, and the association with other cofactors can modulate the substrate spectificity of the enzyme. For instance, in the presence of Mn(2+), it displays a specific Cys-Gly hydrolyzing activity of Cys-Gly-S-conjugates. Involved in the metabolism of glutathione and in the degradation of glutathione S-conjugates, which may play a role in the control of the cell redox status. This chain is Cytosol aminopeptidase, found in Homo sapiens (Human).